The chain runs to 494 residues: Cytochrome P450 monooxygenase ccsD (494 aa).

The chain crosses the membrane as a helical span at residues 5–25 (ISPRTLVLLAVTCSLLVLYFS). Cys438 provides a ligand contact to heme. Residues Asn445 and Asn477 are each glycosylated (N-linked (GlcNAc...) asparagine).

It belongs to the cytochrome P450 family. The cofactor is heme.

Its subcellular location is the membrane. The protein operates within mycotoxin biosynthesis. Cytochrome P450 monooxygenase; part of the gene cluster that mediates the biosynthesis of a family of the mycotoxins cytochalasins E and K. The hybrid PKS-NRPS synthetase ccsA and the enoyl reductase ccsC are responsible for fusion of phenylalanine with an octaketide backbone and subsequent release of the stable tetramic acid precursor. The polyketide synthase module (PKS) of the PKS-NRPS ccsA is responsible for the synthesis of the octaketide backbone. The downstream nonribosomal peptide synthetase (NRPS) amidates the carboxyl end of the octaketide with a phenylalanine. A reductase-like domain (R) at the C-terminus catalyzes the reductive release of the polyketide-amino acid intermediate. Because ccsA lacks a designated enoylreductase (ER) domain, the required activity is provided the enoyl reductase ccsC. Upon formation of the 11-membered carbocycle-fused perhydroisoindolone intermediate, a number of oxidative steps are required to afford the final cytochalasin E and K, including two hydroxylations at C17 and C18, one alcohol oxidation at C17, one epoxidation at C6 and C7 and two Baeyer-Villiger oxidations. The oxidative modification at C17, C18 and the C6-C7 epoxidation are likely to be catalyzed by the two cytochrome P450 oxygenases ccsD and ccsG. CcsD may be responsible for the epoxidation of the C6-C7 double bond. CcsG may be responsible for the successive oxidative modifications at C17 and C18. The double Baeyer-Villiger oxidations of ketocytochalasin to precytochalasin and cytochalasin Z(16) are among the final steps leading to cytochalasin E and K and are catalyzed by ccsB. The first oxygen insertion step follows that of the classic BVMO mechanism, generating the ester precytochalasin. Release of precytochalasin into an aqueous environment can generate the shunt product iso-precytochalasin through spontaneous isomerization. Alternatively, precytochalasin can undergo further oxidation by ccsB to yield the in-line carbonate-containing cytochalasin Z(16). Cytochalasin Z(16) is a precursor to cytochalasin E and cytochalasin K, whereas iso-precytochalasin is a precursor to cytochalasin Z(17) and rosellichalasin. The hydrolyase ccsE may catalyze hydrolysis of epoxide bond in cytochalasin E to afford cytochalasin K. The function of ccsF has not been assigned but it may play a role in post-PKS-NRPS biosynthetic step, resistance or transport of cytochalasins and related PKS-NRPS products. This chain is Cytochrome P450 monooxygenase ccsD, found in Aspergillus clavatus (strain ATCC 1007 / CBS 513.65 / DSM 816 / NCTC 3887 / NRRL 1 / QM 1276 / 107).